A 223-amino-acid chain; its full sequence is DNA mismatch repair protein MutH (223 aa).

The protein belongs to the MutH family.

It is found in the cytoplasm. Functionally, sequence-specific endonuclease that cleaves unmethylated GATC sequences. It is involved in DNA mismatch repair. The sequence is that of DNA mismatch repair protein MutH from Shewanella oneidensis (strain ATCC 700550 / JCM 31522 / CIP 106686 / LMG 19005 / NCIMB 14063 / MR-1).